Reading from the N-terminus, the 424-residue chain is MRLSNYYIPTLKETSADVSVVSHKYSIRAGLIKQIASGIYTWLPLGLRVLRNIENIVREEMNKSGALEVLMPLIQPASLWKESGRYDDYGSEMLRITDRNQREMLFGPTHEEVITDTLRTTLTSHKNLPITLYQIQWKFRDELRPRYGIMRCREFLMKDAYSFDKDLSGAILSYNLMFKTYIKIFKNLGLTPIAVKAESGPIGGNLSHEFHVLANSGESTLYYDQEIIELMNSDNIDIERIKNTYTAADDMHDPQTCPIPPNNIKTSKGIEIGHIFYLGDKYSKPMNANFCDNNDSKPLQMGCYGIGISRLVAAIIEVFHDNKGITWPEEISPFKFSLVNLYSSNDKCIKVAENLHMQLHNDVLYDDTDDSPGIKLTRTDLLGMPWQIIIGKSTVEQDLIEVRNRSNKDKFLISVEQFLKKFKK.

This sequence belongs to the class-II aminoacyl-tRNA synthetase family. ProS type 2 subfamily. Homodimer.

It localises to the cytoplasm. The enzyme catalyses tRNA(Pro) + L-proline + ATP = L-prolyl-tRNA(Pro) + AMP + diphosphate. Catalyzes the attachment of proline to tRNA(Pro) in a two-step reaction: proline is first activated by ATP to form Pro-AMP and then transferred to the acceptor end of tRNA(Pro). This chain is Proline--tRNA ligase, found in Ehrlichia canis (strain Jake).